Here is a 628-residue protein sequence, read N- to C-terminus: Exonuclease V, mitochondrial (628 aa).

A mitochondrion-targeting transit peptide spans 1–21 (MSRFWHFKKFYFTSCYSMQRM). Positions 37–58 (TSEHEQVQSISKEESRSLSSND) are disordered. Residues 38-52 (SEHEQVQSISKEESR) are compositionally biased toward basic and acidic residues. Residues Cys164, Cys586, Cys589, and Cys595 each coordinate [4Fe-4S] cluster.

The protein belongs to the EXO5 family. As to quaternary structure, monomer. It depends on Mg(2+) as a cofactor. The cofactor is [4Fe-4S] cluster.

The protein localises to the mitochondrion. Functionally, single strand DNA specific 5' exonuclease involved in mitochondrial DNA replication and recombination. Releases dinucleotides as main products of catalysis. Has the capacity to slide across 5'double-stranded DNA or 5'RNA sequences and resumes cutting two nucleotides downstream of the double-stranded-to-single-stranded junction or RNA-to-DNA junction, respectively. The protein is Exonuclease V, mitochondrial (DEM1) of Candida albicans (strain SC5314 / ATCC MYA-2876) (Yeast).